Here is a 491-residue protein sequence, read N- to C-terminus: UDP-N-acetylmuramate--L-alanine ligase (491 aa).

126–132 (GTHGKTT) contacts ATP.

Belongs to the MurCDEF family.

The protein resides in the cytoplasm. It carries out the reaction UDP-N-acetyl-alpha-D-muramate + L-alanine + ATP = UDP-N-acetyl-alpha-D-muramoyl-L-alanine + ADP + phosphate + H(+). It functions in the pathway cell wall biogenesis; peptidoglycan biosynthesis. Functionally, cell wall formation. This is UDP-N-acetylmuramate--L-alanine ligase from Shigella flexneri serotype 5b (strain 8401).